Reading from the N-terminus, the 126-residue chain is Aspartate 1-decarboxylase (126 aa).

S25 serves as the catalytic Schiff-base intermediate with substrate; via pyruvic acid. S25 bears the Pyruvic acid (Ser) mark. T57 contributes to the substrate binding site. Residue Y58 is the Proton donor of the active site. 73-75 (GAA) lines the substrate pocket.

The protein belongs to the PanD family. As to quaternary structure, heterooctamer of four alpha and four beta subunits. It depends on pyruvate as a cofactor. Is synthesized initially as an inactive proenzyme, which is activated by self-cleavage at a specific serine bond to produce a beta-subunit with a hydroxyl group at its C-terminus and an alpha-subunit with a pyruvoyl group at its N-terminus.

It localises to the cytoplasm. It catalyses the reaction L-aspartate + H(+) = beta-alanine + CO2. It participates in cofactor biosynthesis; (R)-pantothenate biosynthesis; beta-alanine from L-aspartate: step 1/1. Functionally, catalyzes the pyruvoyl-dependent decarboxylation of aspartate to produce beta-alanine. The protein is Aspartate 1-decarboxylase of Halorhodospira halophila (strain DSM 244 / SL1) (Ectothiorhodospira halophila (strain DSM 244 / SL1)).